Reading from the N-terminus, the 495-residue chain is Potassium voltage-gated channel subfamily A member 1 (495 aa).

The segment at 1–30 (MTVMSGENADEASTAPGHPQDGSYPRQADH) is disordered. The segment at 1–128 (MTVMSGENAD…FYELGEEAME (128 aa)) is tetramerization domain. Over 1–164 (MTVMSGENAD…LLFEYPESSG (164 aa)) the chain is Cytoplasmic. A Phosphoserine modification is found at serine 23. A helical transmembrane segment spans residues 165 to 186 (PARVIAIVSVMVILISIVIFCL). Residues 187–220 (ETLPELKDDKDFTGTIHRIDNTTVIYTSNIFTDP) are Extracellular-facing. Asparagine 207 carries N-linked (GlcNAc...) asparagine glycosylation. Residues 221–242 (FFIVETLCIIWFSFELVVRFFA) traverse the membrane as a helical segment. A lipid anchor (S-palmitoyl cysteine) is attached at cysteine 243. Topologically, residues 243-253 (CPSKTDFFKNI) are cytoplasmic. Residues 254 to 274 (MNFIDIVAIIPYFITLGTEIA) form a helical membrane-spanning segment. Topologically, residues 275 to 287 (EQEGNQKGEQATS) are extracellular. Residues 288–308 (LAILRVIRLVRVFRIFKLSRH) traverse the membrane as a helical; Voltage-sensor segment. Topologically, residues 309-323 (SKGLQILGQTLKASM) are cytoplasmic. The S4-S5 linker stretch occupies residues 310-323 (KGLQILGQTLKASM). Serine 322 carries the post-translational modification Phosphoserine; by PKA. A helical transmembrane segment spans residues 324 to 345 (RELGLLIFFLFIGVILFSSAVY). The Extracellular portion of the chain corresponds to 346 to 359 (FAEAEEAESHFSSI). Positions 360 to 371 (PDAFWWAVVSMT) form an intramembrane region, helical. The Selectivity filter signature appears at 372–377 (TVGYGD). An intramembrane segment occupies 372–379 (TVGYGDMY). The Extracellular portion of the chain corresponds to 380-386 (PVTIGGK). Residues 387 to 415 (IVGSLCAIAGVLTIALPVPVIVSNFNYFY) traverse the membrane as a helical segment. The Cytoplasmic segment spans residues 416-495 (HRETEGEEQA…VNKSKLLTDV (80 aa)). Residues serine 437 and serine 439 each carry the phosphoserine modification. Serine 446 bears the Phosphoserine; by PKA mark. Positions 493–495 (TDV) match the PDZ-binding motif.

Belongs to the potassium channel family. A (Shaker) (TC 1.A.1.2) subfamily. Kv1.1/KCNA1 sub-subfamily. As to quaternary structure, homotetramer and heterotetramer with other channel-forming alpha subunits, such as KCNA2, KCNA4, KCNA5, KCNA6 and KCNA7. Channel activity is regulated by interaction with the beta subunits KCNAB1 and KCNAB2. Identified in a complex with KCNA2 and KCNAB2. Interacts (via C-terminus) with the PDZ domains of DLG1, DLG2 and DLG4. Interacts with LGI1 within a complex containing LGI1, KCNA4 and KCNAB1. Interacts (via N-terminus) with STX1A; this promotes channel inactivation. Interacts (via N-terminus) with the heterodimer formed by GNB1 and GNG2; this promotes channel inactivation. Can interact simultaneously with STX1A and the heterodimer formed by GNB1 and GNG2. Interacts (via cytoplasmic N-terminal domain) with KCNRG; this inhibits channel activity. Interacts with ANK3; this inhibits channel activity. Interacts with ADAM11. N-glycosylated. Post-translationally, palmitoylated on Cys-243; which may be required for membrane targeting. In terms of processing, phosphorylated on tyrosine residues. Phosphorylation increases in response to NRG1; this inhibits channel activity. Phosphorylation at Ser-446 regulates channel activity by down-regulating expression at the cell membrane. As to expression, detected in brain. Expressed in cerebellar cortex basket cell terminals, the area surround the Purkinje cell soma, and the pinceaux expansions encircling the axon initial segment (at protein level). Detected in the juxtaparanodal regions of the nodes of Ranvier in myelinated axons. Detected in the paranodal region in sciatic nerve. Detected on cell bodies in cerebellum, dorsal and ventral cochlear nucleus, pontine reticular nucleus, mesencephalic trigeminal nucleus, motor trigeminal nucleus and the pricipal sensory trigeminal nucleus. Detected in terminal fields of basket cells in the cerebellum corpus medullare. Detected in hippocampus CA3 pyramidal neurons and in the hilus and stratum moleculare of the dentate gyrus. Detected in the central nucleus and the external nucleus of the inferior colliculus. Detected in fiber tracts in the optic tract, external medullary lamina, stria terminalis, medulla, ventral pallidum and substantia nigra. Detected in neurons from dorsal root ganglion. Detected in neurons in the medial nucleus of the trapezoid body. Detected in midbrain dopamine neuron axon terminals. Detected in brain cortex. Detected in brainstem. Detected in juxtaparanodal regions of the nodes of Ranvier in the vagus nerve, but only at very low levels in the heart. Detected in the islet of Langerhans. Detected at the luminal membrane in distal convoluted tubules in the kidney (at protein level). Detected in hippocampus, thalamus, neocortex and ventral brain cortex, including the piriform and entorhinal cortex and the amygdala. Detected in midbrain dopamine neurons. Detected in heart atrium, ventricle, sinoatrial node and atrioventricular node.

The protein localises to the cell membrane. Its subcellular location is the cell projection. It localises to the axon. It is found in the membrane. The protein resides in the perikaryon. The protein localises to the dendrite. Its subcellular location is the cell junction. It localises to the synapse. It is found in the cytoplasmic vesicle. The protein resides in the endoplasmic reticulum. The protein localises to the presynaptic cell membrane. Its subcellular location is the presynapse. The catalysed reaction is K(+)(in) = K(+)(out). Inhibited by 4-aminopyridine (4-AP), tetraethylammonium (TEA) and dendrotoxin (DTX), but not by charybdotoxin (CTX). Voltage-gated potassium channel that mediates transmembrane potassium transport in excitable membranes, primarily in the brain and the central nervous system, but also in the kidney. Contributes to the regulation of the membrane potential and nerve signaling, and prevents neuronal hyperexcitability. Forms tetrameric potassium-selective channels through which potassium ions pass in accordance with their electrochemical gradient. The channel alternates between opened and closed conformations in response to the voltage difference across the membrane. Can form functional homotetrameric channels and heterotetrameric channels that contain variable proportions of KCNA1, KCNA2, KCNA4, KCNA5, KCNA6, KCNA7, and possibly other family members as well; channel properties depend on the type of alpha subunits that are part of the channel. Channel properties are modulated by cytoplasmic beta subunits that regulate the subcellular location of the alpha subunits and promote rapid inactivation of delayed rectifier potassium channels. In vivo, membranes probably contain a mixture of heteromeric potassium channel complexes, making it difficult to assign currents observed in intact tissues to any particular potassium channel family member. Homotetrameric KCNA1 forms a delayed-rectifier potassium channel that opens in response to membrane depolarization, followed by slow spontaneous channel closure. In contrast, a heterotetrameric channel formed by KCNA1 and KCNA4 shows rapid inactivation. Regulates neuronal excitability in hippocampus, especially in mossy fibers and medial perforant path axons, preventing neuronal hyperexcitability. May function as down-stream effector for G protein-coupled receptors and inhibit GABAergic inputs to basolateral amygdala neurons. May contribute to the regulation of neurotransmitter release, such as gamma-aminobutyric acid (GABA) release. Plays a role in regulating the generation of action potentials and preventing hyperexcitability in myelinated axons of the vagus nerve, and thereby contributes to the regulation of heart contraction. Required for normal neuromuscular responses. Regulates the frequency of neuronal action potential firing in response to mechanical stimuli, and plays a role in the perception of pain caused by mechanical stimuli, but does not play a role in the perception of pain due to heat stimuli. Required for normal responses to auditory stimuli and precise location of sound sources, but not for sound perception. The use of toxins that block specific channels suggest that it contributes to the regulation of the axonal release of the neurotransmitter dopamine. Required for normal postnatal brain development and normal proliferation of neuronal precursor cells in the brain. Plays a role in the reabsorption of Mg(2+) in the distal convoluted tubules in the kidney and in magnesium ion homeostasis, probably via its effect on the membrane potential. This Mus musculus (Mouse) protein is Potassium voltage-gated channel subfamily A member 1.